The sequence spans 491 residues: Chromosomal replication initiator protein DnaA (491 aa).

Residues 1 to 69 are domain I, interacts with DnaA modulators; sequence MTTWNKCLKK…TIQEFHDGDL (69 aa). The tract at residues 69-154 is domain II; that stretch reads LLIEYSNKKF…KDDQEYSFGL (86 aa). Positions 106 to 126 are disordered; sequence DSEETSLNQEPKKSQKKLSSK. Residues 155–371 are domain III, AAA+ region; the sequence is PLKEKYVFDS…GALNRVLTTS (217 aa). ATP contacts are provided by Gly199, Gly201, Lys202, and Thr203. Residues 372-491 form a domain IV, binds dsDNA region; sequence KFNHKDPTIE…YELLLDKISR (120 aa).

Belongs to the DnaA family. Oligomerizes as a right-handed, spiral filament on DNA at oriC.

Its subcellular location is the cytoplasm. Plays an essential role in the initiation and regulation of chromosomal replication. ATP-DnaA binds to the origin of replication (oriC) to initiate formation of the DNA replication initiation complex once per cell cycle. Binds the DnaA box (a 9 base pair repeat at the origin) and separates the double-stranded (ds)DNA. Forms a right-handed helical filament on oriC DNA; dsDNA binds to the exterior of the filament while single-stranded (ss)DNA is stabiized in the filament's interior. The ATP-DnaA-oriC complex binds and stabilizes one strand of the AT-rich DNA unwinding element (DUE), permitting loading of DNA polymerase. After initiation quickly degrades to an ADP-DnaA complex that is not apt for DNA replication. Binds acidic phospholipids. In Francisella philomiragia subsp. philomiragia (strain ATCC 25017 / CCUG 19701 / FSC 153 / O#319-036), this protein is Chromosomal replication initiator protein DnaA.